A 351-amino-acid chain; its full sequence is Divinyl chlorophyll a/b light-harvesting protein PcbC (351 aa).

6 consecutive transmembrane segments (helical) span residues F27–L47, L64–T84, C89–L109, V203–A223, V244–A264, and L306–L326.

This sequence belongs to the PsbB/PsbC family. IsiA/Pcb subfamily. The antenna complex consists of divinyl chlorophylls (a and b) and divinyl chlorophyll a/b binding proteins and binds more divinyl chlorophyll b than does the antenna complex from high-light-adapted Prochlorococcus. Divinyl chlorophyll a serves as cofactor. Requires divinyl chlorophyll b as cofactor.

The protein resides in the cellular thylakoid membrane. Its function is as follows. The antenna complex functions as a light receptor, it captures and delivers excitation energy to photosystems II and I. The Prochlorales pcb genes are not related to higher plant LHCs. This Prochlorococcus marinus (strain SARG / CCMP1375 / SS120) protein is Divinyl chlorophyll a/b light-harvesting protein PcbC (pcbC).